The primary structure comprises 1349 residues: Aldehyde oxidase 2 (1349 aa).

A 2Fe-2S ferredoxin-type domain is found at 8–96; it reads DELVFFVNGR…GAAVTTVEGV (89 aa). Positions 47, 52, 55, and 78 each coordinate [2Fe-2S] cluster. Q117 is a Mo-molybdopterin binding site. [2Fe-2S] cluster-binding residues include C118, C121, C153, and C155. Residue C155 coordinates Mo-molybdopterin. The FAD-binding PCMH-type domain maps to 240–425; sequence FYGERVTWIS…ESVHIPHSQK (186 aa). Residues 268–275, A349, S358, H362, D371, and L415 contribute to the FAD site; that span reads LVVGNTSL. Residues 816 to 817, 1098 to 1101, Q1213, and L1278 contribute to the Mo-molybdopterin site; these read GF and ASVG. E1280 (proton acceptor; for azaheterocycle hydroxylase activity) is an active-site residue.

Belongs to the xanthine dehydrogenase family. As to quaternary structure, homodimer. It depends on [2Fe-2S] cluster as a cofactor. FAD serves as cofactor. Requires Mo-molybdopterin as cofactor. As to expression, only detected at very few levels in nasal mucosa.

It localises to the cytoplasm. It catalyses the reaction an aldehyde + O2 + H2O = a carboxylate + H2O2 + H(+). Oxidase with broad substrate specificity, oxidizing aromatic azaheterocycles, such as phthalazine, as well as aldehydes, such as benzaldehyde and retinal. In Macaca fascicularis (Crab-eating macaque), this protein is Aldehyde oxidase 2 (AOX2).